We begin with the raw amino-acid sequence, 324 residues long: bZIP transcription factor 46 (324 aa).

The segment at 106–127 (LGGSDDEDPAAAAAAAAPAQRQ) is disordered. A compositionally biased stretch (low complexity) spans 115–124 (AAAAAAAAPA). The region spanning 242–287 (VERRQRRMIKNRESAARSRARKQAYIMELEAEVAKLKEQKAELQKK) is the bZIP domain. A basic motif region spans residues 244–263 (RRQRRMIKNRESAARSRARK). The segment at 270–284 (LEAEVAKLKEQKAEL) is leucine-zipper.

As to quaternary structure, interacts with MODD. Interacts with SAPK2, SAPK6 and SAPK9. Post-translationally, phosphorylated on serine and threonine residues by SAPK2, SAPK6 and SAPK9. Phosphorylation is required for full transactivation activity. Expressed in roots, shoots, leaves, flag leaves, stems, flowers and panicles. Widely expressed.

It localises to the nucleus. Functionally, transcription factor involved in abscisic acid (ABA) signaling pathway. Transcription factor activity is fully activated by ABA. Acts as a positive regulator of the expression of abiotic stress-responsive genes through an ABA-dependent signaling pathway. Acts as a positive regulator of ABA signaling and drought stress tolerance. Plays an important role in ABA and auxin responses. Involved in ABA signaling and stress responses by directly binding to the ABA-responsive element (ABRE)-containing genes, especially WRKY family genes. Modulates response to auxin. Suppresses auxin signaling by targeting ABRE-containing genes related to auxin metabolism or signaling. The protein is bZIP transcription factor 46 of Oryza sativa subsp. japonica (Rice).